The primary structure comprises 1506 residues: ABC transporter C family member 9 (1506 aa).

Transmembrane regions (helical) follow at residues 37–57 (MQVT…FGVV), 84–104 (ISLL…LLLF), 116–136 (VSVF…SVVV), 150–170 (MLRS…AHFI), 179–199 (FQDY…AVSI), 315–335 (AINA…PYLI), 350–370 (LNHG…ETVT), 427–447 (FIWY…AIYI), 452–472 (LGLG…CNYP), 541–561 (FILW…CMLM), and 567–587 (AGAV…IFGL). Residues 314–596 (AAINAVFAVV…LPDLLSALVQ (283 aa)) enclose the ABC transmembrane type-1 1 domain. The region spanning 630-853 (VEIENGAFSW…NIGFEVLVGA (224 aa)) is the ABC transporter 1 domain. 665-672 (GAVGSGKS) lines the ATP pocket. A run of 5 helical transmembrane segments spans residues 934 to 956 (LLVP…SNYW), 976 to 996 (ILLV…ARTI), 1048 to 1068 (MAVK…TIFV), 1167 to 1187 (LSHF…EGVI), and 1191 to 1211 (IAGL…TVIW). An ABC transmembrane type-1 2 domain is found at 936–1218 (VPFIILAQSC…VIWNICNAEN (283 aa)). Residues 1257–1489 (FRDLQVRYAE…EDSFFSKLIK (233 aa)) enclose the ABC transporter 2 domain. 1289–1296 (GRTGSGKS) lines the ATP pocket.

It belongs to the ABC transporter superfamily. ABCC family. Conjugate transporter (TC 3.A.1.208) subfamily. As to expression, ubiquitous.

The protein localises to the membrane. The catalysed reaction is ATP + H2O + xenobioticSide 1 = ADP + phosphate + xenobioticSide 2.. Functionally, pump for glutathione S-conjugates. This chain is ABC transporter C family member 9 (ABCC9), found in Arabidopsis thaliana (Mouse-ear cress).